We begin with the raw amino-acid sequence, 286 residues long: 4-diphosphocytidyl-2-C-methyl-D-erythritol kinase (286 aa).

Lys-11 is a catalytic residue. 94–104 (PMGGGIGGGSS) lines the ATP pocket. Residue Asp-136 is part of the active site.

Belongs to the GHMP kinase family. IspE subfamily.

The catalysed reaction is 4-CDP-2-C-methyl-D-erythritol + ATP = 4-CDP-2-C-methyl-D-erythritol 2-phosphate + ADP + H(+). It functions in the pathway isoprenoid biosynthesis; isopentenyl diphosphate biosynthesis via DXP pathway; isopentenyl diphosphate from 1-deoxy-D-xylulose 5-phosphate: step 3/6. In terms of biological role, catalyzes the phosphorylation of the position 2 hydroxy group of 4-diphosphocytidyl-2C-methyl-D-erythritol. This is 4-diphosphocytidyl-2-C-methyl-D-erythritol kinase from Pseudomonas putida (strain ATCC 700007 / DSM 6899 / JCM 31910 / BCRC 17059 / LMG 24140 / F1).